The chain runs to 195 residues: MPTMSRPALDVKGGTSPVKENANPEMNSLAYSNLGVKDRKAVAILHYPGVASNGTKASGAPTSSSGSPSPISSSTATPPTKPPPFNLHPAPHLLASMQLQKLNSQYHGMAAATPGQPGEAEPLPNWGFGAQAGGAGSLSPSAGAQSPAIIDSDPVDEEVLMSLVVELGLDRANELPELWLGQNEFDFTADFPSGS.

Disordered stretches follow at residues 1-24 (MPTMSRPALDVKGGTSPVKENANP) and 51-149 (ASNG…SPAI). A compositionally biased stretch (low complexity) spans 54–78 (GTKASGAPTSSSGSPSPISSSTATP). Positions 97–106 (MQLQKLNSQY) are enriched in polar residues. A compositionally biased stretch (low complexity) spans 137-148 (SLSPSAGAQSPA). Residues 160–169 (LMSLVVELGL) carry the Nuclear export signal motif.

Belongs to the CITED family. Interacts (via C-terminus) with CREBBP. Interacts with EGR2. Homodimer. Binds to RBM14. Interacts (via N-terminus) with HSPA8; the interaction suppresses the association of CITED1 with p300/CBP and SMAD-mediated transcription transactivation. Interacts (via C-terminus) with TOX3 (via HGM box); the interaction increases estrogen-response element (ERE)-dependent transcription and protection against cell death. Interacts with ESR1; the interaction occurs in a estrogen-dependent manner. Interacts (unphosphorylated form preferentially and via C-terminus) with EP300. In terms of processing, phosphorylated. Phosphorylation changes in a cell cycle-dependent manner and reduces its transcriptional cofactor activity.

The protein resides in the nucleus. Its subcellular location is the cytoplasm. Functionally, transcriptional coactivator of the p300/CBP-mediated transcription complex. Enhances SMAD-mediated transcription by strengthening the functional link between the DNA-binding SMAD transcription factors and the p300/CBP transcription coactivator complex. Stimulates estrogen-dependent transactivation activity mediated by estrogen receptors signaling; stabilizes the interaction of estrogen receptor ESR1 and histone acetyltransferase EP300. Positively regulates TGF-beta signaling through its association with the SMAD/p300/CBP-mediated transcriptional coactivator complex. Induces transcription from estrogen-responsive promoters and protection against cell death. Potentiates EGR2-mediated transcriptional activation activity from the ERBB2 promoter. Acts as an inhibitor of osteoblastic mineralization through a cAMP-dependent parathyroid hormone receptor signaling. May play a role in pigmentation of melanocytes. Associates with chromatin to the estrogen-responsive TGF-alpha promoter region in a estrogen-dependent manner. The polypeptide is Cbp/p300-interacting transactivator 1 (CITED1) (Bos taurus (Bovine)).